The following is an 878-amino-acid chain: Alanine--tRNA ligase (878 aa).

Zn(2+) is bound by residues His566, His570, Cys668, and His672.

This sequence belongs to the class-II aminoacyl-tRNA synthetase family. Zn(2+) serves as cofactor.

It localises to the cytoplasm. It carries out the reaction tRNA(Ala) + L-alanine + ATP = L-alanyl-tRNA(Ala) + AMP + diphosphate. Functionally, catalyzes the attachment of alanine to tRNA(Ala) in a two-step reaction: alanine is first activated by ATP to form Ala-AMP and then transferred to the acceptor end of tRNA(Ala). Also edits incorrectly charged Ser-tRNA(Ala) and Gly-tRNA(Ala) via its editing domain. In Bacillus subtilis (strain 168), this protein is Alanine--tRNA ligase.